Reading from the N-terminus, the 167-residue chain is Fluoride-specific ion channel FluC (167 aa).

Transmembrane regions (helical) follow at residues 32-52 (HVTPIYTIAAISLGASLGALA), 69-89 (IGTLAANLIAAYVVGVTIAYV), 102-122 (FMITGLAGGLSTFSTFTAELF), and 137-157 (LGLHVGGSLALLMLGMLTIGL). The Na(+) site is built by Gly-109 and Ser-112.

The protein belongs to the fluoride channel Fluc/FEX (TC 1.A.43) family.

The protein resides in the cell inner membrane. It carries out the reaction fluoride(in) = fluoride(out). With respect to regulation, na(+) is not transported, but it plays an essential structural role and its presence is essential for fluoride channel function. Functionally, fluoride-specific ion channel. Important for reducing fluoride concentration in the cell, thus reducing its toxicity. The chain is Fluoride-specific ion channel FluC from Xanthomonas oryzae pv. oryzae (strain KACC10331 / KXO85).